Reading from the N-terminus, the 854-residue chain is Patatin-like phospholipase domain-containing protein CHGG_02900 (854 aa).

Disordered regions lie at residues 1-29, 58-138, and 159-186; these read MAGPGYDRVDSKDDEPPNIQIPSRTYGFP, LSAP…PPLS, and QRRVARAKTAPQSSSRNDKKKKRARSKD. Positions 96 to 116 are enriched in basic and acidic residues; the sequence is DLARRPESSGVGFHDEDRTAR. Positions 119–132 are enriched in low complexity; sequence PAGAATAAAAGVAT. The helical transmembrane segment at 199 to 219 threads the bilayer; that stretch reads WPLLGVVTCWLVGLSVVHVLA. One can recognise a PNPLA domain in the interval 387–578; that stretch reads LCLSGGATFA…RTDIPIKALN (192 aa). A GXSXG motif is present at residues 418-422; the sequence is GTSGG. The active-site Nucleophile is S420. Catalysis depends on D565, which acts as the Proton acceptor. 2 disordered regions span residues 724 to 776 and 791 to 830; these read RENR…SILS and RGGIGSGETESEDETSDLDADFYEGITYDGGDDDAGLEFG. Positions 729-751 are enriched in gly residues; the sequence is GGGLGDGGVGSSGGAGGGAGGGQ. Over residues 752 to 761 the composition is skewed to low complexity; it reads AEAVAGQAAG. Residues 799-812 are compositionally biased toward acidic residues; the sequence is TESEDETSDLDADF.

It belongs to the PLPL family.

It localises to the membrane. Its function is as follows. Probable lipid hydrolase. The sequence is that of Patatin-like phospholipase domain-containing protein CHGG_02900 from Chaetomium globosum (strain ATCC 6205 / CBS 148.51 / DSM 1962 / NBRC 6347 / NRRL 1970) (Soil fungus).